The chain runs to 186 residues: Large ribosomal subunit protein bL9 (186 aa).

A compositionally biased stretch (basic and acidic residues) spans Pro-151 to Glu-167. The disordered stretch occupies residues Pro-151–Ala-186. A compositionally biased stretch (acidic residues) spans Ser-168 to Glu-180.

The protein belongs to the bacterial ribosomal protein bL9 family.

Its function is as follows. Binds to the 23S rRNA. The protein is Large ribosomal subunit protein bL9 of Acidiphilium cryptum (strain JF-5).